We begin with the raw amino-acid sequence, 92 residues long: Phosphoribosyl-ATP pyrophosphatase (92 aa).

Belongs to the PRA-PH family.

The protein localises to the cytoplasm. It carries out the reaction 1-(5-phospho-beta-D-ribosyl)-ATP + H2O = 1-(5-phospho-beta-D-ribosyl)-5'-AMP + diphosphate + H(+). It participates in amino-acid biosynthesis; L-histidine biosynthesis; L-histidine from 5-phospho-alpha-D-ribose 1-diphosphate: step 2/9. This chain is Phosphoribosyl-ATP pyrophosphatase, found in Leptospira borgpetersenii serovar Hardjo-bovis (strain JB197).